The chain runs to 294 residues: Pyridoxal 5'-phosphate synthase subunit PdxS (294 aa).

A D-ribose 5-phosphate-binding site is contributed by Asp-24. The active-site Schiff-base intermediate with D-ribose 5-phosphate is the Lys-81. Gly-153 is a D-ribose 5-phosphate binding site. Arg-165 provides a ligand contact to D-glyceraldehyde 3-phosphate. D-ribose 5-phosphate contacts are provided by residues Gly-214 and 235-236; that span reads GS.

The protein belongs to the PdxS/SNZ family. In the presence of PdxT, forms a dodecamer of heterodimers.

It carries out the reaction aldehydo-D-ribose 5-phosphate + D-glyceraldehyde 3-phosphate + L-glutamine = pyridoxal 5'-phosphate + L-glutamate + phosphate + 3 H2O + H(+). It functions in the pathway cofactor biosynthesis; pyridoxal 5'-phosphate biosynthesis. Catalyzes the formation of pyridoxal 5'-phosphate from ribose 5-phosphate (RBP), glyceraldehyde 3-phosphate (G3P) and ammonia. The ammonia is provided by the PdxT subunit. Can also use ribulose 5-phosphate and dihydroxyacetone phosphate as substrates, resulting from enzyme-catalyzed isomerization of RBP and G3P, respectively. The sequence is that of Pyridoxal 5'-phosphate synthase subunit PdxS from Bacillus velezensis (strain DSM 23117 / BGSC 10A6 / LMG 26770 / FZB42) (Bacillus amyloliquefaciens subsp. plantarum).